The primary structure comprises 397 residues: Mannosylglycerate synthase (397 aa).

Residues 7-11, isoleucine 35, glutamine 66, lysine 76, aspartate 100, and 100-101 contribute to the GDP-alpha-D-mannose site; these read PFKHE and DA. An a divalent metal cation-binding site is contributed by aspartate 102. (R)-glycerate is bound by residues arginine 131 and 136–139; that span reads AMIT. GDP-alpha-D-mannose contacts are provided by leucine 163 and aspartate 192. A divalent metal cation is bound at residue histidine 217. Residues arginine 218 and tyrosine 220 each coordinate GDP-alpha-D-mannose.

The protein belongs to the glycosyltransferase 78 family. As to quaternary structure, homotetramer. Dimer of dimers. Mg(2+) is required as a cofactor. Requires Ca(2+) as cofactor. It depends on Mn(2+) as a cofactor. The cofactor is Ni(2+). Co(2+) serves as cofactor.

It catalyses the reaction (R)-glycerate + GDP-alpha-D-mannose = (2R)-2-O-(alpha-D-mannosyl)-glycerate + GDP + H(+). Its activity is regulated as follows. Inhibited by GDP. In terms of biological role, involved in the biosynthesis of the stress protectant 2-O-alpha-D-mannosyl glycerate (MG) which is produced in response to growth at supraoptimal temperature and salinity, and protects several enzymes against inactivation by temperature, freeze-drying and osmotic stress. Catalyzes the condensation of alpha-GDP-D-mannose (GDP-Man) with D-glycerate to produce alpha-mannosyl-D-glycerate. It is specific for GDP-Man, but it can also use alpha-GDP-D-glucose (GDP-Glc), beta-GDP-D-fructose, alpha-UDP-D-mannose and alpha-UDP-D-glucose as sugar donors. It is specific for D-glycerate, but it can also use D-lactate and glycolate as sugar acceptors. This reaction occurs with a net retention of anomeric configuration; the newly formed glycosidic linkage has the same alpha configuration as the sugar donor. This is Mannosylglycerate synthase (mgs) from Rhodothermus marinus (Rhodothermus obamensis).